The chain runs to 331 residues: MSSVKQSAQAATSDVVDTAKNATAETVTAATDFLHTPAVRAALPFINGGLSGMVATTVIQPIDMIKVRIQLAGEGKAGGPKPTPLGVTRDIIASGKAMDLYTGLSAGLLRQAVYTTARIGCFDTFMSRLSARAKEKGQSVGFKERASAGLAAGGLAAMIGNPADLALIRMQSDGLKPVAERKNYKSVIDALGGIARNEGVAALWAGAAPTVVRAMALNFGQLAFFSEAKAQLKARTQWSSKVQTLSASAIAGFFASFFSLPFDFVKTRLQKQTRGPDGKLPYNGMVDCFAKVAKQEGVFRFYRGFGTYYVRIAPHAMVTLLVADYLGWLTK.

Solcar repeat units follow at residues 39-128 (VRAA…FMSR), 140-231 (VGFK…AKAQ), and 239-329 (SSKV…LGWL). 6 consecutive transmembrane segments (helical) span residues 42 to 62 (ALPF…IQPI), 103 to 121 (GLSA…RIGC), 148 to 168 (AGLA…LALI), 199 to 219 (GVAA…ALNF), 245 to 265 (LSAS…FDFV), and 309 to 329 (YVRI…LGWL).

This sequence belongs to the mitochondrial carrier (TC 2.A.29) family.

The protein localises to the mitochondrion inner membrane. Functionally, catalyzes the transport of 2-oxoglutarate across the inner mitochondrial membrane. In Neurospora crassa (strain ATCC 24698 / 74-OR23-1A / CBS 708.71 / DSM 1257 / FGSC 987), this protein is Putative mitochondrial 2-oxoglutarate/malate carrier protein (mic-33).